A 280-amino-acid chain; its full sequence is uncharacterized protein (280 aa).

The protein belongs to the metallo-dependent hydrolases superfamily.

This is an uncharacterized protein from Methanocaldococcus jannaschii (strain ATCC 43067 / DSM 2661 / JAL-1 / JCM 10045 / NBRC 100440) (Methanococcus jannaschii).